The chain runs to 302 residues: uncharacterized protein (302 aa).

In terms of domain architecture, S4 RNA-binding spans 13–89 (QTLFKFLKKT…VNLDIVYEDN (77 aa)). Aspartate 141 is an active-site residue.

It belongs to the pseudouridine synthase RluA family.

The catalysed reaction is a uridine in RNA = a pseudouridine in RNA. This is an uncharacterized protein from Mycoplasma capricolum subsp. capricolum (strain California kid / ATCC 27343 / NCTC 10154).